We begin with the raw amino-acid sequence, 591 residues long: Ferric-chelate reductase 1 (591 aa).

A helical transmembrane segment spans residues phenylalanine 6 to glycine 26. One can recognise a Reelin domain in the interval leucine 13–proline 179. 5 N-linked (GlcNAc...) asparagine glycosylation sites follow: asparagine 50, asparagine 85, asparagine 308, asparagine 321, and asparagine 353. One can recognise a DOMON domain in the interval glutamate 216–glycine 331. One can recognise a Cytochrome b561 domain in the interval aspartate 335–histidine 533. The chain crosses the membrane as a helical span at residues valine 372–alanine 392. Histidine 373 and histidine 413 together coordinate heme b. A run of 2 helical transmembrane segments spans residues leucine 416–glycine 436 and histidine 445–phenylalanine 465. Residues histidine 445 and histidine 481 each coordinate heme b. The next 3 helical transmembrane spans lie at isoleucine 490 to proline 510, tyrosine 514 to alanine 534, and valine 568 to isoleucine 588.

This sequence belongs to the FRRS1 family. It depends on heme b as a cofactor.

The protein resides in the membrane. Its function is as follows. Ferric-chelate reductases reduce Fe(3+) to Fe(2+) before its transport from the endosome to the cytoplasm. The sequence is that of Ferric-chelate reductase 1 (FRRS1) from Bos taurus (Bovine).